The sequence spans 272 residues: Large ribosomal subunit protein uL29m (272 aa).

3 disordered regions span residues 1–29 (MAAA…PLTQ), 56–87 (KHRG…PRNK), and 227–272 (AAAT…TPRL). Positions 17–29 (SSSTPSPLRPLTQ) are enriched in low complexity. 2 stretches are compositionally biased toward low complexity: residues 227-238 (AAATEGEQQAAE) and 249-259 (PATAATPESAT). Polar residues predominate over residues 260–272 (IPSSQQQTDTPRL).

The protein belongs to the universal ribosomal protein uL29 family. Component of the mitochondrial large ribosomal subunit. Mature mitochondrial ribosomes consist of a small (37S) and a large (54S) subunit. The 37S subunit contains at least 33 different proteins and 1 molecule of RNA (15S). The 54S subunit contains at least 45 different proteins and 1 molecule of RNA (21S).

The protein localises to the mitochondrion. The protein is Large ribosomal subunit protein uL29m (MRPL4) of Chaetomium globosum (strain ATCC 6205 / CBS 148.51 / DSM 1962 / NBRC 6347 / NRRL 1970) (Soil fungus).